The primary structure comprises 235 residues: Chalcone--flavanone isomerase 1 (235 aa).

Substrate contacts are provided by Thr50 and Ser192.

It belongs to the chalcone isomerase family.

The enzyme catalyses a chalcone = a flavanone.. It functions in the pathway secondary metabolite biosynthesis; flavonoid biosynthesis. Catalyzes the intramolecular cyclization of bicyclic chalcones into tricyclic (S)-flavanones. Responsible for the isomerization of 4,2',4',6'-tetrahydroxychalcone (also termed chalcone) into naringenin. The polypeptide is Chalcone--flavanone isomerase 1 (CHI1) (Chrysanthemum morifolium (Florist's daisy)).